The following is a 144-amino-acid chain: ATP synthase subunit 9, mitochondrial (144 aa).

The transit peptide at methionine 1–alanine 63 directs the protein to the mitochondrion. Helical transmembrane passes span threonine 83–leucine 103 and alanine 120–methionine 140.

It belongs to the ATPase C chain family. As to quaternary structure, F-type ATPases have 2 components, CF(1) - the catalytic core - and CF(0) - the membrane proton channel. CF(1) has five subunits: alpha(3), beta(3), gamma(1), delta(1), epsilon(1). CF(0) has three main subunits: a, b and c.

Its subcellular location is the mitochondrion membrane. Mitochondrial membrane ATP synthase (F(1)F(0) ATP synthase or Complex V) produces ATP from ADP in the presence of a proton gradient across the membrane which is generated by electron transport complexes of the respiratory chain. F-type ATPases consist of two structural domains, F(1) - containing the extramembraneous catalytic core and F(0) - containing the membrane proton channel, linked together by a central stalk and a peripheral stalk. During catalysis, ATP synthesis in the catalytic domain of F(1) is coupled via a rotary mechanism of the central stalk subunits to proton translocation. Part of the complex F(0) domain. A homomeric c-ring of probably 10 subunits is part of the complex rotary element. The chain is ATP synthase subunit 9, mitochondrial (ATP9) from Podospora anserina (Pleurage anserina).